A 451-amino-acid polypeptide reads, in one-letter code: Ammonium transporter Rh type B (451 aa).

Residues 1 to 11 (MADVSTSMRLK) are Cytoplasmic-facing. A helical transmembrane segment spans residues 12–32 (LPVVCFILEIILIILFGALVQ). The Extracellular portion of the chain corresponds to 33–63 (YDYETDAKEWHNQSHNDYENDFYFRYPSFQD). Asparagine 44 is a glycosylation site (N-linked (GlcNAc...) asparagine). The helical transmembrane segment at 64–84 (VHVMIFIGFGFLMTFLQKYGF) threads the bilayer. Over 85–87 (GSV) the chain is Cytoplasmic. A helical membrane pass occupies residues 88-108 (GFNFLIAAFSLQWATLMQGFF). The Extracellular segment spans residues 109–121 (HGMHGGKIHVGVE). A helical transmembrane segment spans residues 122-142 (SMINADFCTGSVLISFGAVLG). Topologically, residues 143–151 (KTSPIQLLT) are cytoplasmic. The chain crosses the membrane as a helical span at residues 152–172 (MAMFEVTLFAVNEFILLSLLG). Topologically, residues 173–176 (TRDA) are extracellular. Residues 177–197 (GGSMTIHTFGAYFGLMVTRIL) traverse the membrane as a helical segment. The Cytoplasmic portion of the chain corresponds to 198–216 (YRPHLDKSKHRNSSVYHSD). The chain crosses the membrane as a helical span at residues 217–237 (LFAMIGTIYLWMFWPSFNSAI). Over 238 to 247 (TAHGDDQHRT) the chain is Extracellular. A helical membrane pass occupies residues 248–270 (ALNTYYSLAACTLATYGMSAVTS). At 271–274 (HDGK) the chain is on the cytoplasmic side. A helical membrane pass occupies residues 275-295 (LDMVHIQNAALAGGVAVGTAG). Over 296 to 298 (EMM) the chain is Extracellular. A helical transmembrane segment spans residues 299–319 (LTPFGSMIVGFLAGIISVLGF). Topologically, residues 320–340 (KFLSPILESKLKIQDTCGVHN) are cytoplasmic. A helical transmembrane segment spans residues 341–361 (LHGMPGVLGAIVGAVTAALAT). Topologically, residues 362 to 390 (MDVYGKGMEDVFPAVADGSIDASKQGGVQ) are extracellular. A helical membrane pass occupies residues 391–411 (ALSLAITLGIALLGGLIVVFG). At 412–451 (TPPDTLCFEDGVYWEVPESEAPHEAQLTTVRTEETEKLSS) the chain is on the cytoplasmic side.

The protein belongs to the ammonium transporter (TC 2.A.49) family. Rh subfamily.

It localises to the basolateral cell membrane. It is found in the cytoplasmic vesicle membrane. Its function is as follows. Functions as an ammonia transporter. May play a role in the elimination of ammonia in the gill. This chain is Ammonium transporter Rh type B (rhbg), found in Tetraodon nigroviridis (Spotted green pufferfish).